A 212-amino-acid chain; its full sequence is uncharacterized protein (212 aa).

3 residues coordinate S-adenosyl-L-methionine: glycine 53, glutamate 74, and aspartate 97.

The protein belongs to the methyltransferase superfamily. YrrT family.

In terms of biological role, could be a S-adenosyl-L-methionine-dependent methyltransferase. This is an uncharacterized protein from Bacillus thuringiensis (strain Al Hakam).